We begin with the raw amino-acid sequence, 235 residues long: RING-H2 finger protein ATL17 (235 aa).

Residues 1–21 (MLTTTILILLIVILMVSLHLY) form a helical membrane-spanning segment. Residues 76 to 118 (CSVCLSEFKDNESGRVMPNCKHTFHVHCIDMWFHSHSSCPLCR) form an RING-type; atypical zinc finger. The segment at 143 to 167 (VYGDTNHHEGTETTGDSVPEDSQRK) is disordered.

This sequence belongs to the RING-type zinc finger family. ATL subfamily.

The protein localises to the membrane. The catalysed reaction is S-ubiquitinyl-[E2 ubiquitin-conjugating enzyme]-L-cysteine + [acceptor protein]-L-lysine = [E2 ubiquitin-conjugating enzyme]-L-cysteine + N(6)-ubiquitinyl-[acceptor protein]-L-lysine.. Its pathway is protein modification; protein ubiquitination. Its function is as follows. May be involved in the early steps of the plant defense signaling pathway. The protein is RING-H2 finger protein ATL17 (ATL17) of Arabidopsis thaliana (Mouse-ear cress).